The following is a 131-amino-acid chain: Plastocyanin (131 aa).

The signal sequence occupies residues 1 to 34; sequence MKFFASLSKRFAPVLSLVVLVAGTLLLSAAPASA. The 97-residue stretch at 35 to 131 folds into the Plastocyanin-like domain; it reads ATVQIKMGTD…AGMVGTITVE (97 aa). Positions 73, 116, 119, and 124 each coordinate Cu cation.

Belongs to the plastocyanin family. The cofactor is Cu(2+).

The protein localises to the cellular thylakoid membrane. Participates in electron transfer between P700 and the cytochrome b6-f complex in photosystem I. The protein is Plastocyanin (petE) of Prochlorothrix hollandica.